A 353-amino-acid chain; its full sequence is G-protein coupled estrogen receptor 1 (353 aa).

The Extracellular portion of the chain corresponds to 1–40; it reads MEEQTTNVIQIYVNGTEQFNASFDFNITDVKESTDTYEFY. The chain crosses the membrane as a helical span at residues 41–61; it reads IIGLFLSCLYTIFLFPIGFIG. Residues 62–81 are Cytoplasmic-facing; that stretch reads NILILVVNLNHRERMTIPDL. The helical transmembrane segment at 82-102 threads the bilayer; the sequence is YFVNLAVADLILVADSLIEVF. The Extracellular segment spans residues 103–112; it reads NLNEKYYDYA. The helical transmembrane segment at 113–133 threads the bilayer; it reads VLCTFMSLFLQVNMYSSIFFL. Residues Cys-115 and Cys-192 are joined by a disulfide bond. Over 134–160 the chain is Cytoplasmic; that stretch reads TWMSFDRYVALTSSMSSSPLRTMQHAK. Residues 161-181 traverse the membrane as a helical segment; that stretch reads LSCSLIWMASILATLLPFTIV. Over 182 to 202 the chain is Extracellular; the sequence is QTQHTGEVHFCFANVFEIQWL. A helical membrane pass occupies residues 203-223; it reads EVTIGFLIPFSIIGLCYSLIV. The Cytoplasmic segment spans residues 224–245; that stretch reads RTLMRAQKHKGLWPRRQKALRM. Residues 246–266 traverse the membrane as a helical segment; the sequence is IVVVVLVFFICWLPENVFISI. Over 267-292 the chain is Extracellular; sequence QLLQGTADPSKRTDTTLWHDYPLTGH. Residues 293–313 form a helical membrane-spanning segment; the sequence is IVNLAAFSNSCLNPIIYSFLG. Residues 314–353 are Cytoplasmic-facing; it reads ETFRDKLRLFIKRKASWSVVYRFCNHTLDLQIPVRSESEV.

It belongs to the G-protein coupled receptor 1 family. Homodimer. Heterodimer. As to expression, expressed in brain regions that are known to control reproduction and sex behavior. Expressed in ovary, muscle and intestine. Expressed in early germ cells of the testis, including the spermatogonia, spermatocytes, and somatic cells such as Sertoli cells.

It is found in the nucleus. The protein localises to the cytoplasm. It localises to the perinuclear region. The protein resides in the cytoskeleton. Its subcellular location is the cytoplasmic vesicle membrane. It is found in the cell membrane. The protein localises to the basolateral cell membrane. It localises to the endoplasmic reticulum membrane. The protein resides in the early endosome. Its subcellular location is the recycling endosome. It is found in the golgi apparatus. The protein localises to the trans-Golgi network. It localises to the golgi apparatus membrane. The protein resides in the cell projection. Its subcellular location is the dendrite. It is found in the dendritic spine membrane. The protein localises to the axon. It localises to the postsynaptic density. The protein resides in the mitochondrion membrane. Membrane G-protein coupled estrogen receptor that binds to 17-beta-estradiol (E2) with high affinity, leading to rapid and transient activation of numerous intracellular signaling pathways. Plays a role in the embryonic development of sensory and motor neurons. Specifically induces apoptosis and reduces proliferation of brain cells. Involved in maintenance of meiotic arrest in oocytes. This Danio rerio (Zebrafish) protein is G-protein coupled estrogen receptor 1 (gper1).